Reading from the N-terminus, the 140-residue chain is Ergosterol biosynthetic protein 28 homolog (140 aa).

A run of 4 helical transmembrane segments spans residues 4-24 (FLNV…GNTL), 52-72 (TFGI…IDIH), 79-99 (ITLW…FVYG), and 105-125 (IGVL…LVGL).

Belongs to the ERG28 family. In terms of tissue distribution, ubiquitous; strongly expressed in testis and some cancer cell lines.

Its subcellular location is the endoplasmic reticulum membrane. This chain is Ergosterol biosynthetic protein 28 homolog, found in Homo sapiens (Human).